We begin with the raw amino-acid sequence, 100 residues long: Small ribosomal subunit protein uS14c (100 aa).

It belongs to the universal ribosomal protein uS14 family. Part of the 30S ribosomal subunit.

The protein localises to the plastid. It is found in the chloroplast. Functionally, binds 16S rRNA, required for the assembly of 30S particles. This is Small ribosomal subunit protein uS14c from Mesostigma viride (Green alga).